A 129-amino-acid chain; its full sequence is Glycine cleavage system H protein (129 aa).

Positions 24–106 (TYTVGITEHA…YAGGWIFKIK (83 aa)) constitute a Lipoyl-binding domain. Residue Lys65 is modified to N6-lipoyllysine.

Belongs to the GcvH family. In terms of assembly, the glycine cleavage system is composed of four proteins: P, T, L and H. Requires (R)-lipoate as cofactor.

The glycine cleavage system catalyzes the degradation of glycine. The H protein shuttles the methylamine group of glycine from the P protein to the T protein. The sequence is that of Glycine cleavage system H protein from Escherichia coli O7:K1 (strain IAI39 / ExPEC).